Consider the following 308-residue polypeptide: Glucan 1,3-beta-glucosidase BGL2 (308 aa).

Positions 1 to 18 (MQIKFLTTLATVLTSVAA) are cleaved as a signal peptide. The active-site Proton donor is glutamate 119. Asparagine 197 carries N-linked (GlcNAc...) asparagine glycosylation. Glutamate 228 serves as the catalytic Nucleophile.

Belongs to the glycosyl hydrolase 17 family.

It is found in the secreted. It localises to the cell wall. The protein localises to the cytoplasm. The catalysed reaction is Successive hydrolysis of beta-D-glucose units from the non-reducing ends of (1-&gt;3)-beta-D-glucans, releasing alpha-glucose.. Functionally, cell wall glucan 1,3-beta-glucosidase involved in cell wall biosynthesis and virulence. Crucial for delivery of beta-1,3-glucan to the biofilm matrix and for accumulation of mature matrix biomass. Plays a role as a major antigen in human systemic candidiasis patients. The sequence is that of Glucan 1,3-beta-glucosidase BGL2 (BGL2) from Candida albicans (strain SC5314 / ATCC MYA-2876) (Yeast).